The chain runs to 80 residues: Cytochrome c oxidase subunit 7A1, mitochondrial (80 aa).

The transit peptide at 1–21 directs the protein to the mitochondrion; the sequence is MRALRVSQALVRSFSSTARNR. The Mitochondrial matrix segment spans residues 22 to 46; it reads LENRVAEKQKIFQADNDLPVHLKGG. The helical transmembrane segment at 47-75 threads the bilayer; sequence ATDNILYRVTMTLCLGGTVYSLYCLGWAS. Residues 76–80 are Mitochondrial intermembrane-facing; sequence FPHKK.

This sequence belongs to the cytochrome c oxidase VIIa family. In terms of assembly, component of the complex IV (CIV, cytochrome c oxidase), a multisubunit enzyme composed of 14 subunits. The complex is composed of a catalytic core of 3 subunits MT-CO1, MT-CO2 and MT-CO3, encoded in the mitochondrial DNA, and 11 supernumerary subunits COX4I1 (or COX4I2), COX5A, COX5B, COX6A2 (or COX6A1), COX6B1 (or COX6B2), COX6C, COX7A1 (or COX7A2), COX7B, COX7C, COX8B and NDUFA4, which are encoded in the nuclear genome. The complex exists as a monomer or a dimer and forms supercomplexes (SCs) in the inner mitochondrial membrane with NADH-ubiquinone oxidoreductase (complex I, CI) and ubiquinol-cytochrome c oxidoreductase (cytochrome b-c1 complex, complex III, CIII), resulting in different assemblies (supercomplex SCI(1)III(2)IV(1) and megacomplex MCI(2)III(2)IV(2)).

The protein localises to the mitochondrion inner membrane. Its pathway is energy metabolism; oxidative phosphorylation. In terms of biological role, component of the mitochondrial respiratory complex IV (CIV, also named cytochrome c oxidase complex), the last enzyme in the mitochondrial electron transport chain which drives oxidative phosphorylation. The CIV complex is the component of the respiratory chain that catalyzes the reduction of oxygen to water. Acts as an assembly factor that specifically drives the homodimerization of CIV complexes, mediating the formation of mitochondrial respiratory supercomplexes (respirasomes) containing two CIV: supercomplxes with two molecules of CIV show improved activity. Despite being highly expressed in brown adipose tissue, not required for thermogenesis. This chain is Cytochrome c oxidase subunit 7A1, mitochondrial (COX7A1), found in Sus scrofa (Pig).